The chain runs to 292 residues: Putative sugar lactone lactonase YvrE (292 aa).

Glutamate 15, asparagine 146, and aspartate 196 together coordinate a divalent metal cation.

Belongs to the SMP-30/CGR1 family. The cofactor is a divalent metal cation.

Its subcellular location is the cytoplasm. This Bacillus subtilis (strain 168) protein is Putative sugar lactone lactonase YvrE (yvrE).